Here is a 249-residue protein sequence, read N- to C-terminus: Ribosomal RNA small subunit methyltransferase J (249 aa).

S-adenosyl-L-methionine is bound by residues 101-102, 117-118, 153-154, and aspartate 171; these read RD, ER, and SS.

This sequence belongs to the methyltransferase superfamily. RsmJ family.

The protein localises to the cytoplasm. It catalyses the reaction guanosine(1516) in 16S rRNA + S-adenosyl-L-methionine = N(2)-methylguanosine(1516) in 16S rRNA + S-adenosyl-L-homocysteine + H(+). Specifically methylates the guanosine in position 1516 of 16S rRNA. The polypeptide is Ribosomal RNA small subunit methyltransferase J (Salmonella arizonae (strain ATCC BAA-731 / CDC346-86 / RSK2980)).